Reading from the N-terminus, the 89-residue chain is Small ribosomal subunit protein uS15 (89 aa).

This sequence belongs to the universal ribosomal protein uS15 family. Part of the 30S ribosomal subunit. Forms a bridge to the 50S subunit in the 70S ribosome, contacting the 23S rRNA.

One of the primary rRNA binding proteins, it binds directly to 16S rRNA where it helps nucleate assembly of the platform of the 30S subunit by binding and bridging several RNA helices of the 16S rRNA. Functionally, forms an intersubunit bridge (bridge B4) with the 23S rRNA of the 50S subunit in the ribosome. The sequence is that of Small ribosomal subunit protein uS15 from Klebsiella pneumoniae (strain 342).